The chain runs to 1015 residues: Collagen alpha-2(I) chain (1015 aa).

Positions 1-1015 (SGGFDFSFLP…FGYEGDFYRA (1015 aa)) are disordered. Proline 10 and proline 13 each carry 4-hydroxyproline. Over residues 20–30 (KGVGLGPGPMG) the composition is skewed to gly residues. At proline 38 the chain carries 4-hydroxyproline. Residues 43 to 69 (QGPAGEPGEPGQTGPAGARGPAGPPGK) show a composition bias toward low complexity. The span at 70–84 (AGEDGHPGKPGRPGE) shows a compositional bias: basic and acidic residues. The residue at position 106 (lysine 106) is a 5-hydroxylysine; alternate. A glycan (O-linked (Gal...) hydroxylysine; alternate) is linked at lysine 106. 3 stretches are compositionally biased toward low complexity: residues 140 to 169 (VGAPGPAGARGSDGSVGPVGPAGPIGSAGP), 194 to 208 (AGPRGEQGLPGVSGP), and 235 to 250 (PGPVGAVGATGARGLV). Residues 302–311 (GLRGGPGSRG) show a composition bias toward gly residues. Over residues 324 to 340 (PAGSRGASGPAGVRGPS) the composition is skewed to low complexity. A 4-hydroxyproline mark is found at proline 346 and proline 349. The span at 441-450 (GVQGGKGEQG) shows a compositional bias: gly residues. The span at 497–514 (PGESGAAGPVGPIGSRGP) shows a compositional bias: low complexity. Residues 534 to 545 (GTAGPGSGGLPG) are compositionally biased toward gly residues. Composition is skewed to low complexity over residues 568–612 (VGTT…PRGS) and 619–639 (VGPAGPNGFAGPAGAAGQPGA). Over residues 640–649 (KGERGTKGPK) the composition is skewed to basic and acidic residues. Residues 657–670 (PTGPVGAAGPSGPN) show a composition bias toward low complexity. The segment covering 674–686 (GPAGGRGDGGPPG) has biased composition (gly residues). The segment covering 687-697 (LTGFPGAAGRT) has biased composition (low complexity). Over residues 734 to 743 (GETGAGGPPG) the composition is skewed to gly residues. Low complexity-rich tracts occupy residues 751–778 (SGEPGTAGPPGTAGPQGLLGAPGILGLP), 786–799 (LPGVAGAVGEPGPL), 846–868 (YAGNAGPVGAAGAPGPHGTVGPA), and 877–897 (PGPAGSVGPVGAVGPRGPSGP). Residues 901–912 (RGDKGEAGDKGP) are compositionally biased toward basic and acidic residues. The segment covering 987-997 (PAGPPGPPGPP) has biased composition (pro residues).

Belongs to the fibrillar collagen family. In terms of assembly, trimers of one alpha 2(I) and two alpha 1(I) chains. Interacts (via C-terminus) with TMEM131 (via PapD-L domain); the interaction is direct and is involved in assembly and TRAPPIII ER-to-Golgi transport complex-dependent secretion of collagen. Post-translationally, prolines at the third position of the tripeptide repeating unit (G-X-Y) are hydroxylated in some or all of the chains. As to expression, expressed in bones.

The protein localises to the secreted. It localises to the extracellular space. Its subcellular location is the extracellular matrix. Functionally, type I collagen is a member of group I collagen (fibrillar forming collagen). The chain is Collagen alpha-2(I) chain from Doedicurus sp. (South American giant glyptodont).